A 310-amino-acid chain; its full sequence is Zinc-finger homeodomain protein 3 (310 aa).

The tract at residues 1-64 (MEIASQEDPI…GLGKNHDHSH (64 aa)) is disordered. Over residues 39-56 (LNITTSNPLLVSSNSNGL) the composition is skewed to polar residues. The ZF-HD dimerization-type; degenerate zinc-finger motif lies at 87 to 136 (YKECLKNHAATMGGNAIDGCGEFMPSGEEGSIEALTCSVCNCHRNFHRRE). Disordered stretches follow at residues 184-220 (TAGS…YGHN) and 281-310 (LSKK…STNP). Residues 190 to 199 (ESEDLMEEEG) show a composition bias toward acidic residues. A DNA-binding region (homeobox) is located at residues 222–285 (KKRFRTKFTQ…NNKQNLSKKS (64 aa)). A compositionally biased stretch (low complexity) spans 281-291 (LSKKSNNVSNN). Over residues 292–310 (VDLSAGNNDITENLASTNP) the composition is skewed to polar residues.

As to quaternary structure, homo- and heterodimer with other ZFHD proteins. Interacts with MIF2 and MIF3; these interactions prevent nuclear localization and DNA-binding to inhibit transcription regulation activity. Binds to ZHD1, ZHD2 and ZHD11. Interacts with HIPP30. Interacts with KIN10, KIN11 and FLZ8. In terms of tissue distribution, mostly expressed in flowers and inflorescence.

The protein resides in the nucleus. Functionally, putative transcription factor. The chain is Zinc-finger homeodomain protein 3 (ZHD3) from Arabidopsis thaliana (Mouse-ear cress).